A 220-amino-acid polypeptide reads, in one-letter code: Guanylate kinase (220 aa).

The Guanylate kinase-like domain maps to 3-180 (GRLFVMTGAS…AVADFLAILT (178 aa)). Residue 10–17 (GASGVGKG) participates in ATP binding.

It belongs to the guanylate kinase family.

Its subcellular location is the cytoplasm. The catalysed reaction is GMP + ATP = GDP + ADP. Functionally, essential for recycling GMP and indirectly, cGMP. The protein is Guanylate kinase of Thermus thermophilus (strain ATCC BAA-163 / DSM 7039 / HB27).